The sequence spans 329 residues: tRNA-modifying protein YgfZ (329 aa).

Folate-binding residues include W28 and W188.

This sequence belongs to the tRNA-modifying YgfZ family.

Its subcellular location is the cytoplasm. Functionally, folate-binding protein involved in regulating the level of ATP-DnaA and in the modification of some tRNAs. It is probably a key factor in regulatory networks that act via tRNA modification, such as initiation of chromosomal replication. The chain is tRNA-modifying protein YgfZ from Photorhabdus laumondii subsp. laumondii (strain DSM 15139 / CIP 105565 / TT01) (Photorhabdus luminescens subsp. laumondii).